A 485-amino-acid chain; its full sequence is Protein DETOXIFICATION 14 (485 aa).

The next 12 membrane-spanning stretches (helical) occupy residues 30–50 (LSYIAGPMIAVNSSMYVLQVI), 68–88 (IAVSFCSVTGFSVVFGLASAL), 112–132 (IVSLFLVCIPLSLLWTYIGDI), 147–167 (GKFATWLIPALFGYATLQPLV), 175–195 (LILPLVMSSVSSLCIHIVLCW), 207–227 (GAAIAIGVSYWLNVTVLGLYM), 259–279 (ASMICLEWWSFEFLVLLSGIL), 288–308 (VLSVCLSTQSSLYQIPESLGA), 329–349 (AVYTAMVITGVESIMVGAIVF), 372–392 (MAPLLSLSVIFDALHAALSGV), 405–425 (VNLAAYYLFGIPTAILLAFGF), and 432–452 (LWIGITVGSCVQAVLLGLIVI).

Belongs to the multi antimicrobial extrusion (MATE) (TC 2.A.66.1) family.

The protein resides in the membrane. The chain is Protein DETOXIFICATION 14 from Arabidopsis thaliana (Mouse-ear cress).